Reading from the N-terminus, the 101-residue chain is Small ribosomal subunit protein bS18c (101 aa).

Belongs to the bacterial ribosomal protein bS18 family. Part of the 30S ribosomal subunit.

It is found in the plastid. The protein resides in the chloroplast. This is Small ribosomal subunit protein bS18c from Carica papaya (Papaya).